We begin with the raw amino-acid sequence, 482 residues long: Glutamate--tRNA ligase (482 aa).

Residues 9–19 carry the 'HIGH' region motif; that stretch reads PSPTGYLHIGG. A 'KMSKS' region motif is present at residues 252-256; the sequence is KLSKR. An ATP-binding site is contributed by Lys255.

It belongs to the class-I aminoacyl-tRNA synthetase family. Glutamate--tRNA ligase type 1 subfamily. As to quaternary structure, monomer.

It localises to the cytoplasm. The enzyme catalyses tRNA(Glu) + L-glutamate + ATP = L-glutamyl-tRNA(Glu) + AMP + diphosphate. Its function is as follows. Catalyzes the attachment of glutamate to tRNA(Glu) in a two-step reaction: glutamate is first activated by ATP to form Glu-AMP and then transferred to the acceptor end of tRNA(Glu). This chain is Glutamate--tRNA ligase, found in Ureaplasma urealyticum serovar 10 (strain ATCC 33699 / Western).